The primary structure comprises 181 residues: Large ribosomal subunit protein uL5c (181 aa).

This sequence belongs to the universal ribosomal protein uL5 family. In terms of assembly, part of the 50S ribosomal subunit; contacts the 5S rRNA.

The protein localises to the plastid. Functionally, binds 5S rRNA, forms part of the central protuberance of the 50S subunit. The sequence is that of Large ribosomal subunit protein uL5c (rpl5) from Helicosporidium sp. subsp. Simulium jonesii (Green alga).